Consider the following 130-residue polypeptide: Protachykinin-1 (130 aa).

Positions Met1 to Ala19 are cleaved as a signal peptide. A propeptide spanning residues Glu20–Ala56 is cleaved from the precursor. Met68 and Met107 each carry methionine amide.

This sequence belongs to the tachykinin family. Post-translationally, the substance P form is cleaved at Pro-59 by the prolyl endopeptidase FAP (seprase) activity (in vitro). Substance P is also cleaved and degraded by Angiotensin-converting enzyme (ACE) and neprilysin (MME).

It localises to the secreted. Tachykinins are active peptides which excite neurons, evoke behavioral responses, are potent vasodilators and secretagogues, and contract (directly or indirectly) many smooth muscles. The sequence is that of Protachykinin-1 (TAC1) from Mesocricetus auratus (Golden hamster).